Here is a 961-residue protein sequence, read N- to C-terminus: DNA replication licensing factor MCM2 (961 aa).

The segment covering 1–17 has biased composition (polar residues); that stretch reads MDDSENNAPSTPGSPGF. Disordered regions lie at residues 1–81 and 120–220; these read MDDS…FNDN and AEAE…EEDE. Over residues 39-78 the composition is skewed to acidic residues; that stretch reads SDDDDDDVVGAEEAEVDPNVLPEDDGVVAAEEEEDGEDLF. Basic and acidic residues-rich tracts occupy residues 120 to 146 and 166 to 176; these read AEAELDARDVRTGAAPDRKLPRMLHDQ and PPREPRTPRSD. The span at 205–220 shows a compositional bias: acidic residues; that stretch reads QTDDDPYEDEFDEEDE. The C4-type zinc-finger motif lies at 380-406; that stretch reads CSKCGTVLGPFFQNSYTEVKVGSCPEC. The MCM domain maps to 524-730; sequence IGERIVKSIA…FTDEMLARFV (207 aa). ATP is bound at residue 574 to 581; that stretch reads GDPGTAKS. Positions 706–709 match the Arginine finger motif; that stretch reads SRFD.

It belongs to the MCM family. As to quaternary structure, component of the minichromosome maintenance (MCM) complex, a heterotetramer composed of MCM2, MCM3, MCM4, MCM5, MCM6 and MCM7.

Its subcellular location is the nucleus. The enzyme catalyses ATP + H2O = ADP + phosphate + H(+). Its function is as follows. Probable component of the MCM2-7 complex (MCM complex) that may function as a DNA helicase and which is essential to undergo a single round of replication initiation and elongation per cell cycle in eukaryotic cells. This chain is DNA replication licensing factor MCM2, found in Oryza sativa subsp. indica (Rice).